Consider the following 356-residue polypeptide: GTPase Obg (356 aa).

Residues 1-159 enclose the Obg domain; sequence MKFLDEAKVY…RWIWLRMKLI (159 aa). In terms of domain architecture, OBG-type G spans 160-327; the sequence is ADAGLVGLPN…VLRALTDVIS (168 aa). GTP-binding positions include 166–173, 191–195, 212–215, 279–282, and 308–310; these read GLPNAGKS, FTTLH, DIPG, NKID, and SGV. 2 residues coordinate Mg(2+): Ser173 and Thr193. A disordered region spans residues 329-356; that stretch reads APVSTKAKGEPTENETPPPSTGWSPLSN.

This sequence belongs to the TRAFAC class OBG-HflX-like GTPase superfamily. OBG GTPase family. In terms of assembly, monomer. It depends on Mg(2+) as a cofactor.

The protein resides in the cytoplasm. Functionally, an essential GTPase which binds GTP, GDP and possibly (p)ppGpp with moderate affinity, with high nucleotide exchange rates and a fairly low GTP hydrolysis rate. Plays a role in control of the cell cycle, stress response, ribosome biogenesis and in those bacteria that undergo differentiation, in morphogenesis control. The sequence is that of GTPase Obg from Afipia carboxidovorans (strain ATCC 49405 / DSM 1227 / KCTC 32145 / OM5) (Oligotropha carboxidovorans).